The following is a 273-amino-acid chain: DNA repair protein RecO (273 aa).

Belongs to the RecO family.

Its function is as follows. Involved in DNA repair and RecF pathway recombination. The polypeptide is DNA repair protein RecO (Mycolicibacterium gilvum (strain PYR-GCK) (Mycobacterium gilvum (strain PYR-GCK))).